The chain runs to 188 residues: Ribose 1,5-bisphosphate phosphokinase PhnN (188 aa).

ATP is bound at residue G9–D16.

It belongs to the ribose 1,5-bisphosphokinase family.

The enzyme catalyses alpha-D-ribose 1,5-bisphosphate + ATP = 5-phospho-alpha-D-ribose 1-diphosphate + ADP. Its pathway is metabolic intermediate biosynthesis; 5-phospho-alpha-D-ribose 1-diphosphate biosynthesis; 5-phospho-alpha-D-ribose 1-diphosphate from D-ribose 5-phosphate (route II): step 3/3. In terms of biological role, catalyzes the phosphorylation of ribose 1,5-bisphosphate to 5-phospho-D-ribosyl alpha-1-diphosphate (PRPP). The polypeptide is Ribose 1,5-bisphosphate phosphokinase PhnN (Pectobacterium atrosepticum (strain SCRI 1043 / ATCC BAA-672) (Erwinia carotovora subsp. atroseptica)).